A 411-amino-acid chain; its full sequence is Imidazolonepropionase (411 aa).

2 residues coordinate Fe(3+): His-78 and His-80. Zn(2+) is bound by residues His-78 and His-80. Positions 87, 150, and 183 each coordinate 4-imidazolone-5-propanoate. Tyr-150 lines the N-formimidoyl-L-glutamate pocket. Residue His-248 coordinates Fe(3+). His-248 lines the Zn(2+) pocket. Gln-251 contributes to the 4-imidazolone-5-propanoate binding site. Residue Asp-322 participates in Fe(3+) binding. Asp-322 contacts Zn(2+). Residues Asn-324 and Gly-326 each coordinate N-formimidoyl-L-glutamate. 4-imidazolone-5-propanoate is bound at residue Thr-327.

Belongs to the metallo-dependent hydrolases superfamily. HutI family. Zn(2+) serves as cofactor. Fe(3+) is required as a cofactor.

The protein localises to the cytoplasm. The enzyme catalyses 4-imidazolone-5-propanoate + H2O = N-formimidoyl-L-glutamate. The protein operates within amino-acid degradation; L-histidine degradation into L-glutamate; N-formimidoyl-L-glutamate from L-histidine: step 3/3. Catalyzes the hydrolytic cleavage of the carbon-nitrogen bond in imidazolone-5-propanoate to yield N-formimidoyl-L-glutamate. It is the third step in the universal histidine degradation pathway. The chain is Imidazolonepropionase from Flavobacterium psychrophilum (strain ATCC 49511 / DSM 21280 / CIP 103535 / JIP02/86).